Reading from the N-terminus, the 169-residue chain is Inorganic pyrophosphatase (169 aa).

K26, R40, and Y52 together coordinate substrate. Mg(2+) is bound by residues D62, D67, and D99. Y138 lines the substrate pocket.

This sequence belongs to the PPase family. As to quaternary structure, homohexamer. Mg(2+) serves as cofactor.

It localises to the cytoplasm. It carries out the reaction diphosphate + H2O = 2 phosphate + H(+). Catalyzes the hydrolysis of inorganic pyrophosphate (PPi) forming two phosphate ions. In Thermoplasma volcanium (strain ATCC 51530 / DSM 4299 / JCM 9571 / NBRC 15438 / GSS1), this protein is Inorganic pyrophosphatase.